The following is a 419-amino-acid chain: Akuammiline synthase 1 (419 aa).

Histidine 151 (proton acceptor) is an active-site residue. Residues 206-213 (TRRFVFPA) carry the Nuclear localization signal motif. Aspartate 359 acts as the Proton acceptor in catalysis.

It belongs to the plant acyltransferase family. As to quaternary structure, monomer.

The protein localises to the cytoplasm. Its subcellular location is the nucleus. It carries out the reaction rhazimol + acetyl-CoA = akuammiline + CoA + H(+). It participates in alkaloid biosynthesis. Acyltransferase involved in the biosynthesis of akuammilan monoterpene indole alkaloids (MIAs) natural products, components with various biological properties such as antidiabetic, antibacterial, anti-inflammatory, anticancer, and antimalarial activities. Catalyzes the conversion of rhazimol to akuammiline. This Alstonia scholaris (Dogbane) protein is Akuammiline synthase 1.